Reading from the N-terminus, the 163-residue chain is Nucleotide-binding protein Mmcs_0777 (163 aa).

This sequence belongs to the YajQ family.

Its function is as follows. Nucleotide-binding protein. The protein is Nucleotide-binding protein Mmcs_0777 of Mycobacterium sp. (strain MCS).